We begin with the raw amino-acid sequence, 584 residues long: 2-isopropylmalate synthase (584 aa).

The Pyruvate carboxyltransferase domain occupies 45 to 323 (PRWLSTDLRD…SPNLDFSKLD (279 aa)). Asp-54, His-262, His-264, and Asn-298 together coordinate a divalent metal cation.

Belongs to the alpha-IPM synthase/homocitrate synthase family. LeuA type 2 subfamily. As to quaternary structure, homodimer. The cofactor is a divalent metal cation.

It catalyses the reaction 3-methyl-2-oxobutanoate + acetyl-CoA + H2O = (2S)-2-isopropylmalate + CoA + H(+). The protein operates within amino-acid biosynthesis; L-leucine biosynthesis; L-leucine from 3-methyl-2-oxobutanoate: step 1/4. Functionally, catalyzes the condensation of the acetyl group of acetyl-CoA with 3-methyl-2-oxobutanoate (2-oxoisovalerate) to form 3-carboxy-3-hydroxy-4-methylpentanoate (2-isopropylmalate). The chain is 2-isopropylmalate synthase (leu3) from Schizosaccharomyces pombe (strain 972 / ATCC 24843) (Fission yeast).